The primary structure comprises 305 residues: Porphobilinogen deaminase (305 aa).

C238 carries the post-translational modification S-(dipyrrolylmethanemethyl)cysteine.

This sequence belongs to the HMBS family. In terms of assembly, monomer. Dipyrromethane serves as cofactor.

The catalysed reaction is 4 porphobilinogen + H2O = hydroxymethylbilane + 4 NH4(+). It participates in porphyrin-containing compound metabolism; protoporphyrin-IX biosynthesis; coproporphyrinogen-III from 5-aminolevulinate: step 2/4. In terms of biological role, tetrapolymerization of the monopyrrole PBG into the hydroxymethylbilane pre-uroporphyrinogen in several discrete steps. The sequence is that of Porphobilinogen deaminase from Rubrobacter xylanophilus (strain DSM 9941 / JCM 11954 / NBRC 16129 / PRD-1).